Reading from the N-terminus, the 242-residue chain is 3-dehydroquinate dehydratase (242 aa).

3-dehydroquinate contacts are provided by residues 39–41 (EIR) and arginine 73. Histidine 135 serves as the catalytic Proton donor/acceptor. Lysine 162 acts as the Schiff-base intermediate with substrate in catalysis. 2 residues coordinate 3-dehydroquinate: arginine 203 and glutamine 228.

This sequence belongs to the type-I 3-dehydroquinase family. In terms of assembly, homodimer.

The catalysed reaction is 3-dehydroquinate = 3-dehydroshikimate + H2O. The protein operates within metabolic intermediate biosynthesis; chorismate biosynthesis; chorismate from D-erythrose 4-phosphate and phosphoenolpyruvate: step 3/7. Functionally, involved in the third step of the chorismate pathway, which leads to the biosynthesis of aromatic amino acids. Catalyzes the cis-dehydration of 3-dehydroquinate (DHQ) and introduces the first double bond of the aromatic ring to yield 3-dehydroshikimate. The sequence is that of 3-dehydroquinate dehydratase from Methanosarcina barkeri (strain Fusaro / DSM 804).